A 391-amino-acid chain; its full sequence is Na(+)/H(+) antiporter NhaA (391 aa).

11 helical membrane passes run 14-34 (AGGILLVIAAAIAMTIANSPL), 47-67 (FGMSVSHWINDGLMAVFFLLI), 87-107 (IFPAIAAVGGMLAPALIYVAF), 117-137 (GWAIPAATDIAFALGIMALLG), 146-166 (VFLLALAIIDDLGVVVIIALF), 171-191 (LSTMALLVGFAMTGVLFMLNA), 205-225 (AILWFAVLKSGVHATLAGVVI), 252-272 (VAFGILPLFAFANAGISLEGV), 280-300 (MLPLGIALGLLVGKPLGIFTF), 318-338 (FIHIFAVSVLCGIGFTMSIFI), and 356-376 (LGILMGSTTAAIIGYVLLHFS).

This sequence belongs to the NhaA Na(+)/H(+) (TC 2.A.33) antiporter family.

Its subcellular location is the cell inner membrane. It carries out the reaction Na(+)(in) + 2 H(+)(out) = Na(+)(out) + 2 H(+)(in). Its function is as follows. Na(+)/H(+) antiporter that extrudes sodium in exchange for external protons. The chain is Na(+)/H(+) antiporter NhaA from Vibrio campbellii (strain ATCC BAA-1116).